The following is a 683-amino-acid chain: Methionine--tRNA ligase (683 aa).

Residues 23–33 carry the 'HIGH' region motif; it reads PYANGSAHIGH. The Zn(2+) site is built by C154, C157, C166, and C170. The 'KMSKS' region motif lies at 335-339; that stretch reads KFSKS. K338 lines the ATP pocket. One can recognise a tRNA-binding domain in the interval 583–683; the sequence is DFAKMELRVG…KPSEPGTKVR (101 aa).

It belongs to the class-I aminoacyl-tRNA synthetase family. MetG type 1 subfamily. Homodimer. Zn(2+) serves as cofactor.

Its subcellular location is the cytoplasm. The enzyme catalyses tRNA(Met) + L-methionine + ATP = L-methionyl-tRNA(Met) + AMP + diphosphate. Its function is as follows. Is required not only for elongation of protein synthesis but also for the initiation of all mRNA translation through initiator tRNA(fMet) aminoacylation. The polypeptide is Methionine--tRNA ligase (Methanocella arvoryzae (strain DSM 22066 / NBRC 105507 / MRE50)).